A 268-amino-acid chain; its full sequence is Glutamate racemase (268 aa).

Substrate is bound by residues 13–14 (DS) and 45–46 (YG). Cysteine 77 serves as the catalytic Proton donor/acceptor. 78–79 (NT) lines the substrate pocket. Cysteine 185 acts as the Proton donor/acceptor in catalysis. Residue 186–187 (TH) participates in substrate binding.

It belongs to the aspartate/glutamate racemases family.

The catalysed reaction is L-glutamate = D-glutamate. Its pathway is cell wall biogenesis; peptidoglycan biosynthesis. Functionally, provides the (R)-glutamate required for cell wall biosynthesis. In Vibrio campbellii (strain ATCC BAA-1116), this protein is Glutamate racemase.